The chain runs to 236 residues: 3-deoxy-D-manno-octulosonic acid kinase (236 aa).

Residue Asp167 is part of the active site.

This sequence belongs to the protein kinase superfamily. KdkA/RfaP family.

It is found in the cell inner membrane. It catalyses the reaction an alpha-Kdo-(2-&gt;6)-lipid IVA + ATP = a 4-O-phospho-alpha-Kdo-(2-&gt;6)-lipid IVA + ADP + H(+). It participates in bacterial outer membrane biogenesis; LPS core biosynthesis. Catalyzes the ATP-dependent phosphorylation of the 3-deoxy-D-manno-octulosonic acid (Kdo) residue in Kdo-lipid IV(A) at the 4-OH position. This Vibrio vulnificus (strain CMCP6) protein is 3-deoxy-D-manno-octulosonic acid kinase.